The sequence spans 98 residues: Venom toxin OcyC11 (98 aa).

Residues 1–20 (MKIACTLVLFVMLRCYVNAR) form the signal peptide.

In terms of processing, contains 4 disulfide bonds. As to expression, expressed by the venom gland.

The protein resides in the secreted. This Opisthacanthus cayaporum (South American scorpion) protein is Venom toxin OcyC11.